Here is a 156-residue protein sequence, read N- to C-terminus: Small ribosomal subunit protein uS7 (156 aa).

The protein belongs to the universal ribosomal protein uS7 family. In terms of assembly, part of the 30S ribosomal subunit. Contacts proteins S9 and S11.

Functionally, one of the primary rRNA binding proteins, it binds directly to 16S rRNA where it nucleates assembly of the head domain of the 30S subunit. Is located at the subunit interface close to the decoding center, probably blocks exit of the E-site tRNA. The chain is Small ribosomal subunit protein uS7 from Citrifermentans bemidjiense (strain ATCC BAA-1014 / DSM 16622 / JCM 12645 / Bem) (Geobacter bemidjiensis).